We begin with the raw amino-acid sequence, 626 residues long: DNA mismatch repair protein MutL (626 aa).

The protein belongs to the DNA mismatch repair MutL/HexB family.

This protein is involved in the repair of mismatches in DNA. It is required for dam-dependent methyl-directed DNA mismatch repair. May act as a 'molecular matchmaker', a protein that promotes the formation of a stable complex between two or more DNA-binding proteins in an ATP-dependent manner without itself being part of a final effector complex. This chain is DNA mismatch repair protein MutL, found in Pelodictyon phaeoclathratiforme (strain DSM 5477 / BU-1).